The primary structure comprises 283 residues: Formamidopyrimidine-DNA glycosylase (283 aa).

P2 acts as the Schiff-base intermediate with DNA in catalysis. Catalysis depends on E3, which acts as the Proton donor. K58 serves as the catalytic Proton donor; for beta-elimination activity. Residues H100, R119, and R162 each coordinate DNA. The segment at 247-283 adopts an FPG-type zinc-finger fold; the sequence is RVYGREGQPCVTPGCRGLVGRIVQSGRSSFHCPECQR. The active-site Proton donor; for delta-elimination activity is the R273.

It belongs to the FPG family. In terms of assembly, monomer. It depends on Zn(2+) as a cofactor.

The enzyme catalyses Hydrolysis of DNA containing ring-opened 7-methylguanine residues, releasing 2,6-diamino-4-hydroxy-5-(N-methyl)formamidopyrimidine.. The catalysed reaction is 2'-deoxyribonucleotide-(2'-deoxyribose 5'-phosphate)-2'-deoxyribonucleotide-DNA = a 3'-end 2'-deoxyribonucleotide-(2,3-dehydro-2,3-deoxyribose 5'-phosphate)-DNA + a 5'-end 5'-phospho-2'-deoxyribonucleoside-DNA + H(+). Involved in base excision repair of DNA damaged by oxidation or by mutagenic agents. Acts as a DNA glycosylase that recognizes and removes damaged bases. Has a preference for oxidized purines, such as 7,8-dihydro-8-oxoguanine (8-oxoG). Has AP (apurinic/apyrimidinic) lyase activity and introduces nicks in the DNA strand. Cleaves the DNA backbone by beta-delta elimination to generate a single-strand break at the site of the removed base with both 3'- and 5'-phosphates. In Cereibacter sphaeroides (strain ATCC 17025 / ATH 2.4.3) (Rhodobacter sphaeroides), this protein is Formamidopyrimidine-DNA glycosylase.